Here is a 450-residue protein sequence, read N- to C-terminus: Sorting nexin-4 (450 aa).

M1 carries the N-acetylmethionine modification. The disordered stretch occupies residues 1-53 (MEQAAPDPERLWQPAPLEPLSHPDAGLESMVGEETKGARDEGPGDGTMTENNF). Positions 33 to 42 (EETKGARDEG) are enriched in basic and acidic residues. Residues 61–187 (SVSEAEKRTG…YLFLTQEGNW (127 aa)) form the PX domain. The a 1,2-diacyl-sn-glycero-3-phospho-(1D-myo-inositol-3-phosphate) site is built by R106, S108, K132, and R154.

This sequence belongs to the sorting nexin family. In terms of assembly, heterodimer; heterodimerizes with SNX7 or SNX30. Interacts with WWC1/KIBRA. Identified in a complex with WWC1/KIBRA and dynein components DYNLL1 and DYNC1I2. Interacts with BIN1.

It is found in the early endosome. It localises to the early endosome membrane. Its function is as follows. Involved in the regulation of endocytosis and in several stages of intracellular trafficking. Plays a role in recycling endocytosed transferrin receptor and prevent its degradation. Involved in autophagosome assembly by regulating trafficking and recycling of phospholipid scramblase ATG9A. This Bos taurus (Bovine) protein is Sorting nexin-4.